Here is a 315-residue protein sequence, read N- to C-terminus: Olfactory receptor 5AN6 (315 aa).

At 1 to 29 (MPGGRNSTVITKFILVGFSDFPKLKLVLF) the chain is on the extracellular side. The chain crosses the membrane as a helical span at residues 30–50 (VIFLGSYLSTVVWNLGLIILI). Topologically, residues 51–54 (RIDP) are cytoplasmic. Residues 55–75 (YLHTPMYFFLSNLSFLDFCYI) form a helical membrane-spanning segment. At 76 to 99 (SSTTPKMLSGFFQKSKSISFVGCT) the chain is on the extracellular side. Residues Cys-98 and Cys-180 are joined by a disulfide bond. Residues 100–120 (MQYFIFSSLGLSECCLLAAMA) form a helical membrane-spanning segment. Residues 121-123 (YDR) are Cytoplasmic-facing. Residues 124–143 (YAAICNPLLYTAIMSPSLCV) traverse the membrane as a helical segment. Residue His-144 is a topological domain, extracellular. A helical transmembrane segment spans residues 145–165 (MVVGAYSTGLLGSLIQLCAIL). Topologically, residues 166–202 (QLHFCGPNIINHFFCDLPQLLVLSCSETFPLQVLKFV) are cytoplasmic. Residues 203 to 223 (IAVIFGVASVIVILISYGYII) traverse the membrane as a helical segment. Topologically, residues 224–240 (GTILNISSVEGRSKAFN) are extracellular. The chain crosses the membrane as a helical span at residues 241 to 261 (TCASHLTAVTLFFGSGLFVYM). Topologically, residues 262 to 272 (RPSSNSSQGYD) are cytoplasmic. A helical transmembrane segment spans residues 273–293 (KMASVFYTVVIPMLNPLIYSL). The Extracellular portion of the chain corresponds to 294–315 (RNKEIKDALQRCKNKCFSQCHC).

It belongs to the G-protein coupled receptor 1 family. In terms of tissue distribution, localized in the dorsomedial and ventral region of the olfactory bulb.

The protein localises to the cell membrane. Odorant receptor specific for muscone. Muscone-binding causes a conformation change that triggers signaling via G(s)-class of G alpha protein GNAL, activating adenylyl cyclase. The chain is Olfactory receptor 5AN6 from Mus musculus (Mouse).